Here is a 179-residue protein sequence, read N- to C-terminus: Probable F-box protein At3g25550 (179 aa).

Residues 19–55 (IPNDDVLEEIIVRLPVKTLTRFQTVSKHWRHTIKSRN) enclose the F-box domain.

The protein is Probable F-box protein At3g25550 of Arabidopsis thaliana (Mouse-ear cress).